A 1483-amino-acid polypeptide reads, in one-letter code: Heme-responsive zinc finger transcription factor HAP1 (1483 aa).

Positions 1-50 (MSNTPYNSSVPSIASMTQSSVSRSPNMHTATTPGANTSSNSPPLHMSSDS) are enriched in polar residues. The tract at residues 1-56 (MSNTPYNSSVPSIASMTQSSVSRSPNMHTATTPGANTSSNSPPLHMSSDSSKIKRK) is disordered. 6 residues coordinate Zn(2+): C64, C67, C74, C81, C84, and C93. The segment at residues 64–93 (CTICRKRKVKCDKLRPHCQQCTKTGVAHLC) is a DNA-binding region (zn(2)-C6 fungal-type). The stretch at 105–134 (EKELLKDNELKKLRERVKSLEKTLSKVHSS) forms a coiled coil. The interval 126–208 (KTLSKVHSSP…ANSSSLSISN (83 aa)) is disordered. Residues 130-142 (KVHSSPSSNSLKS) are compositionally biased toward low complexity. Composition is skewed to polar residues over residues 143 to 152 (YNTPESSNLF) and 160 to 176 (TLVN…SHMH). Over residues 177 to 208 (QQQQQQQQQEQQQDFSRSANANANSSSLSISN) the composition is skewed to low complexity. The interval 244–444 (KGDPYLKLLW…NTIPHHQPQS (201 aa)) is heme-responsive; required for HMC formation. HRM repeat units follow at residues 280–285 (KCPINH), 299–304 (KCPVDH), 323–328 (KCPVDH), 347–352 (RCPVDH), 389–394 (KCPVDH), and 415–420 (RCPIDH). 2 stretches are compositionally biased toward polar residues: residues 432 to 447 (STHN…SGSH) and 706 to 734 (QLNA…NPTL). 2 disordered regions span residues 432–458 (STHN…NRKH) and 706–767 (QLNA…KENQ). The span at 735–759 (NNNMSAATTNSSSRSGSADSRSGSN) shows a compositional bias: low complexity. The HRM 7 repeat unit spans residues 1192-1197 (KCPVYQ).

As to quaternary structure, binds DNA as a homodimer. Interacts with SRO9 and YDJ1. In the absence of heme, binds to at least four cellular proteins, including YDJ1 and SRO9, forming a high-molecular-weight complex (HMC) which results in repression of its activity and dictates its DNA-binding specificity.

The protein resides in the nucleus. In terms of biological role, regulation of oxygen dependent gene expression. It modulates the expression of Iso-1 (CYP1) and Iso-2 (CYP3) cytochrome c. In response to heme, promotes transcription of genes encoding functions required for respiration, controlling oxidative damage and repression of anaerobic genes. Binds to the sequence 5'-CGGNNNTNNCGG-3'. The chain is Heme-responsive zinc finger transcription factor HAP1 (HAP1) from Saccharomyces cerevisiae (strain Lalvin EC1118 / Prise de mousse) (Baker's yeast).